A 367-amino-acid chain; its full sequence is Regulator of fusion ref-1 (367 aa).

Residues 1–10 are compositionally biased toward pro residues; sequence MVLISTPPPA. The tract at residues 1–24 is disordered; it reads MVLISTPPPAYAHNRKTSQEKKRR. The basic motif 1 stretch occupies residues 11 to 24; that stretch reads YAHNRKTSQEKKRR. One can recognise a bHLH 1 domain in the interval 11–63; it reads YAHNRKTSQEKKRRDEINAKIKELQLLIQNESDNEKMTQGDVLNRAVEVVSRM. The helix-loop-helix motif 1 stretch occupies residues 25–63; that stretch reads DEINAKIKELQLLIQNESDNEKMTQGDVLNRAVEVVSRM. Disordered stretches follow at residues 133 to 177 and 313 to 367; these read RSES…RRDR and ATSP…RPWE. A compositionally biased stretch (low complexity) spans 141 to 157; that stretch reads SSMSYRSQSSSPSTSES. The segment covering 161–177 has biased composition (basic and acidic residues); that stretch reads IDRKEVKKNREQDRRDR. Residues 162–175 form a basic motif 2 region; the sequence is DRKEVKKNREQDRR. The bHLH 2 domain maps to 162 to 219; it reads DRKEVKKNREQDRRDRQGEAFDALKNFIIENKLMTSHQVEKMQRLNTLDIIIAYIQNK. The segment at 176 to 219 is helix-loop-helix motif 2; sequence DRQGEAFDALKNFIIENKLMTSHQVEKMQRLNTLDIIIAYIQNK. A compositionally biased stretch (low complexity) spans 313-354; it reads ATSPKSQQSPSYSLDSPPPSSDTSSSSIETPSTPNENSNSNP. A compositionally biased stretch (basic residues) spans 356-367; the sequence is ASRKSKLFRPWE.

In terms of assembly, interacts with unc-37.

The protein localises to the nucleus. Probable transcription factor. Binds 5'-TGCCACGTGTCCA-3' in vitro, probably via the E-box motif 5'-CA[TC][AG]TG-3'. Acts in embryonic development in a Notch-dependent manner, perhaps as a direct target of transcriptional regulator lag-1 in the Notch signaling pathway. Also acts in embryonic development in a Notch-independent manner. Plays a role in both Notch-dependent and -independent pathways in the execution of neuronal lineage decisions in the embryo. Also involved in regulating cell fate leading to formation of neuronal structures known as postdeirids. Involved in the pattern of cell fusion with a large syncytium known as hyp-7, during larval development, in hermaphrodites. Plays a role in regulating the activity of homeobox protein mab-5 in Pn.p cells. This is Regulator of fusion ref-1 from Caenorhabditis elegans.